The chain runs to 386 residues: GTPase Obg (386 aa).

An Obg domain is found at 1-159; the sequence is MKFIDEARIE…RTLKLELKVL (159 aa). The 189-residue stretch at 160–348 folds into the OBG-type G domain; sequence ADVGLLGMPN…LTFAIMSYLD (189 aa). Residues 166-173, 191-195, 213-216, 284-287, and 329-331 contribute to the GTP site; these read GMPNAGKS, FTTLH, DIPG, NKVD, and SAL. Mg(2+) is bound by residues S173 and T193.

This sequence belongs to the TRAFAC class OBG-HflX-like GTPase superfamily. OBG GTPase family. In terms of assembly, monomer. Mg(2+) serves as cofactor.

The protein localises to the cytoplasm. Its function is as follows. An essential GTPase which binds GTP, GDP and possibly (p)ppGpp with moderate affinity, with high nucleotide exchange rates and a fairly low GTP hydrolysis rate. Plays a role in control of the cell cycle, stress response, ribosome biogenesis and in those bacteria that undergo differentiation, in morphogenesis control. This is GTPase Obg from Chromobacterium violaceum (strain ATCC 12472 / DSM 30191 / JCM 1249 / CCUG 213 / NBRC 12614 / NCIMB 9131 / NCTC 9757 / MK).